A 329-amino-acid polypeptide reads, in one-letter code: Ribosomal RNA small subunit methyltransferase H (329 aa).

S-adenosyl-L-methionine-binding positions include 39–41 (GGY), Asp57, Phe84, Asp100, and Gln107. Residues 285 to 305 (GPDKDELAQNPRSRSALLRVG) are disordered.

The protein belongs to the methyltransferase superfamily. RsmH family.

The protein resides in the cytoplasm. The catalysed reaction is cytidine(1402) in 16S rRNA + S-adenosyl-L-methionine = N(4)-methylcytidine(1402) in 16S rRNA + S-adenosyl-L-homocysteine + H(+). In terms of biological role, specifically methylates the N4 position of cytidine in position 1402 (C1402) of 16S rRNA. The protein is Ribosomal RNA small subunit methyltransferase H of Ruegeria sp. (strain TM1040) (Silicibacter sp.).